The sequence spans 378 residues: Tafazzin (378 aa).

Residues 1–137 (MFMVVCSNLR…RLRNPSKFWY (137 aa)) are Mitochondrial intermembrane-facing. A disordered region spans residues 46–112 (APEARPVPDE…DQDADPSLDV (67 aa)). Residues 51-67 (PVPDERYPGSQQDRKDI) are compositionally biased toward basic and acidic residues. The stretch at 138–158 (VVSQFVVSAVGIFSKVVLMFL) is an intramembrane region. Residues 159–378 (NKPRVYNRER…ETEKLHRERN (220 aa)) lie on the Mitochondrial intermembrane side of the membrane. An HXXXXD motif motif is present at residues 188 to 193 (HYSCFD).

It belongs to the taffazin family. Associates with multiple protein complexes. Association with large protein complexes occurs only in the presence of cardiolipin.

The protein localises to the mitochondrion outer membrane. Its subcellular location is the mitochondrion inner membrane. It localises to the mitochondrion. The protein resides in the mitochondrion membrane. It is found in the golgi apparatus membrane. The protein localises to the endoplasmic reticulum membrane. The enzyme catalyses 1'-[1,2-diacyl-sn-glycero-3-phospho],3'-[1-acyl-sn-glycero-3-phospho]-glycerol + a 1,2-diacyl-sn-glycero-3-phosphocholine = a cardiolipin + a 1-acyl-sn-glycero-3-phosphocholine. The catalysed reaction is 1'-[1,2-di-(9Z,12Z-octadecadienoyl)-sn-glycero-3-phospho]-3'-[1-(9Z,12Z-octadecadienoyl)-sn-glycero-3-phospho]-glycerol + 1-hexadecanoyl-2-(9Z,12Z-octadecadienoyl)-sn-glycero-3-phosphocholine = 1',3'-bis-[1,2-di-(9Z,12Z-octadecadienoyl)-sn-glycero-3-phospho]-glycerol + 1-hexadecanoyl-sn-glycero-3-phosphocholine. It catalyses the reaction 1'-[1,2-di-(9Z,12Z-octadecadienoyl)-sn-glycero-3-phospho]-3'-[2-(9Z,12Z-octadecadienoyl)-sn-glycero-3-phospho]-glycerol + 1-hexadecanoyl-2-(9Z,12Z-octadecadienoyl)-sn-glycero-3-phosphocholine = 1',3'-bis-[1,2-di-(9Z,12Z-octadecadienoyl)-sn-glycero-3-phospho]-glycerol + 1-hexadecanoyl-sn-glycero-3-phosphocholine. It carries out the reaction 1,2-di-(9Z,12Z-octadecadienoyl)-sn-glycero-3-phosphocholine + 1'-[1,2-di-(9Z,12Z-octadecadienoyl)-sn-glycero-3-phospho]-3'-[1-(9Z,12Z-octadecadienoyl)-sn-glycero-3-phospho]-glycerol = 1-(9Z,12Z)-octadecadienoyl-sn-glycero-3-phosphocholine + 1',3'-bis-[1,2-di-(9Z,12Z-octadecadienoyl)-sn-glycero-3-phospho]-glycerol. The enzyme catalyses 1-tetradecanoyl-sn-glycero-3-phosphocholine + 1',3'-bis-[1,2-di-(9Z,12Z-octadecadienoyl)-sn-glycero-3-phospho]-glycerol = 1-tetradecanoyl-2-(9Z,12Z-octadecadienoyl)-sn-glycero-3-phosphocholine + 1'-[1,2-di-(9Z,12Z-octadecadienoyl)-sn-glycero-3-phospho]-3'-[1-(9Z,12Z-octadecadienoyl)-sn-glycero-3-phospho]-glycerol. The catalysed reaction is 1',3'-bis[1,2-di-(9Z-octadecenoyl)-sn-glycero-3-phospho]-glycerol + 1-nonadecanoyl-sn-glycero-3-phosphocholine = 1-nonadecanoyl-2-(9Z-octadecenoyl)-sn-glycero-3-phosphocholine + 1'-[1,2-di-(9Z-octadecenoyl)-sn-glycero-3-phospho]-3'-[1-(9Z-octadecenoyl)-sn-glycero-3-phospho]-glycerol. It catalyses the reaction a 1,2-diacyl-sn-glycero-3-phospho-(1'-sn-glycerol) + a 1-acyl-sn-glycero-3-phosphocholine = 1-acyl-sn-glycero-3-phospho-(1'-sn-glycerol) + a 1,2-diacyl-sn-glycero-3-phosphocholine. It carries out the reaction 1-hexadecanoyl-2-(9Z,12Z-octadecadienoyl)-sn-glycero-3-phospho-(1'-sn-glycerol) + 1-hexadecanoyl-sn-glycero-3-phosphocholine = 1-hexadecanoyl-sn-glycero-3-phospho-(1'-sn-glycerol) + 1-hexadecanoyl-2-(9Z,12Z-octadecadienoyl)-sn-glycero-3-phosphocholine. The enzyme catalyses 1,2-di-(9Z-octadecenoyl)-sn-glycero-3-phospho-(1'-sn-glycerol) + 1-nonadecanoyl-sn-glycero-3-phosphocholine = 1-nonadecanoyl-2-(9Z-octadecenoyl)-sn-glycero-3-phosphocholine + 1-(9Z-octadecenoyl)-sn-glycero-3-phospho-(1'-sn-glycerol). The catalysed reaction is a 1,2-diacyl-sn-glycero-3-phosphate + a 1-acyl-sn-glycero-3-phosphocholine = a 1-acyl-sn-glycero-3-phosphate + a 1,2-diacyl-sn-glycero-3-phosphocholine. It catalyses the reaction 1-hexadecanoyl-2-(9Z,12Z-octadecadienoyl)-sn-glycero-3-phosphate + 1-hexadecanoyl-sn-glycero-3-phosphocholine = 1-hexadecanoyl-2-(9Z,12Z-octadecadienoyl)-sn-glycero-3-phosphocholine + 1-hexadecanoyl-sn-glycero-3-phosphate. It carries out the reaction 1-hexadecanoyl-2-(9Z,12Z-octadecadienoyl)-sn-glycero-3-phosphocholine + 1-(9Z-octadecenoyl)-sn-glycero-3-phosphate = 1-(9Z)-octadecenoyl-2-(9Z,12Z)-octadecadienoyl-sn-glycero-3-phosphate + 1-hexadecanoyl-sn-glycero-3-phosphocholine. The enzyme catalyses a 1-acyl-sn-glycero-3-phosphocholine + a 1,2-diacyl-sn-glycero-3-phosphoethanolamine = a 1-acyl-sn-glycero-3-phosphoethanolamine + a 1,2-diacyl-sn-glycero-3-phosphocholine. The catalysed reaction is 1-hexadecanoyl-2-(9Z,12Z-octadecadienoyl)-sn-glycero-3-phosphoethanolamine + 1-hexadecanoyl-sn-glycero-3-phosphocholine = 1-hexadecanoyl-2-(9Z,12Z-octadecadienoyl)-sn-glycero-3-phosphocholine + 1-hexadecanoyl-sn-glycero-3-phosphoethanolamine. It catalyses the reaction 1,2-di-(9Z,12Z-octadecadienoyl)-sn-glycero-3-phosphoethanolamine + 1-tetradecanoyl-sn-glycero-3-phosphocholine = 1-(9Z,12Z-octadecadienoyl)-sn-glycero-3-phosphoethanolamine + 1-tetradecanoyl-2-(9Z,12Z-octadecadienoyl)-sn-glycero-3-phosphocholine. It carries out the reaction 1'-[1,2-diacyl-sn-glycero-3-phospho],3'-[1-acyl-sn-glycero-3-phospho]-glycerol + a 1,2-diacyl-sn-glycero-3-phosphoethanolamine = a cardiolipin + a 1-acyl-sn-glycero-3-phosphoethanolamine. The enzyme catalyses 1-hexadecanoyl-2-(9Z,12Z-octadecadienoyl)-sn-glycero-3-phosphoethanolamine + 1'-[1,2-di-(9Z,12Z-octadecadienoyl)-sn-glycero-3-phospho]-3'-[1-(9Z,12Z-octadecadienoyl)-sn-glycero-3-phospho]-glycerol = 1',3'-bis-[1,2-di-(9Z,12Z-octadecadienoyl)-sn-glycero-3-phospho]-glycerol + 1-hexadecanoyl-sn-glycero-3-phosphoethanolamine. The catalysed reaction is 1'-[1-(9Z,12Z-octadecadienoyl)-2-(9Z-octadecenoyl)-sn-glycero-3-phospho]-3'-[1-(9Z,12Z-octadecadienoyl)-sn-glycero-3-phospho]-glycerol + 1',3'-bis-[1,2-di-(9Z,12Z-octadecadienoyl)-sn-glycero-3-phospho]-glycerol = 1'-[1,2-di-(9Z,12Z-octadecadienoyl)-sn-glycero-3-phospho]-3'-[1-(9Z,12Z-octadecadienoyl)-2-(9Z-octadecenoyl)-sn-glycero-3-phospho]-glycerol + 1'-[1,2-di-(9Z,12Z-octadecadienoyl)-sn-glycero-3-phospho]-3'-[1-(9Z,12Z-octadecadienoyl)-sn-glycero-3-phospho]-glycerol. It catalyses the reaction 1,2-di-(9Z-hexadecenoyl)-sn-glycero-3-phosphocholine + 1-hexadecanoyl-sn-glycero-3-phosphocholine = 1-hexadecanoyl-2-(9Z-hexadecenoyl)-sn-glycero-3-phosphocholine + 1-(9Z-hexadecenoyl)-sn-glycero-3-phosphocholine. It carries out the reaction 1,2-dioctadecanoyl-sn-glycero-3-phosphocholine + 1-hexadecanoyl-sn-glycero-3-phosphocholine = 1-hexadecanoyl-2-octadecanoyl-sn-glycero-3-phosphocholine + 1-octadecanoyl-sn-glycero-3-phosphocholine. The enzyme catalyses 1,2-di-(9Z-octadecenoyl)-sn-glycero-3-phosphocholine + 1-hexadecanoyl-sn-glycero-3-phosphocholine = 1-hexadecanoyl-2-(9Z-octadecenoyl)-sn-glycero-3-phosphocholine + 1-(9Z-octadecenoyl)-sn-glycero-3-phosphocholine. The catalysed reaction is 1,2-di-(9Z,12Z-octadecadienoyl)-sn-glycero-3-phosphocholine + 1-(9Z-octadecenoyl)-sn-glycero-3-phosphocholine = 1-(9Z)-octadecenoyl-2-(9Z,12Z)-octadecadienoyl-sn-glycero-3-phosphocholine + 1-(9Z,12Z)-octadecadienoyl-sn-glycero-3-phosphocholine. It catalyses the reaction 1,2-di-(9Z,12Z,15Z-octadecatrienoyl)-sn-glycero-3-phosphocholine + 1-tetradecanoyl-sn-glycero-3-phosphocholine = 1-tetradecanoyl-2-(9Z,12Z,15Z-octadecatrienoyl)-sn-glycero-3-phosphocholine + 1-(9Z,12Z,15Z-octadecatrienoyl)-sn-glycero-3-phosphocholine. It carries out the reaction 1-nonadecanoyl-sn-glycero-3-phosphocholine + 1-octadecanoyl-2-(9Z-octadecenoyl)-sn-glycero-3-phosphocholine = 1-nonadecanoyl-2-(9Z-octadecenoyl)-sn-glycero-3-phosphocholine + 1-octadecanoyl-sn-glycero-3-phosphocholine. The enzyme catalyses 1-(9Z)-octadecenoyl-2-octadecanoyl-sn-glycero-3-phosphocholine + 1-nonadecanoyl-sn-glycero-3-phosphocholine = 2-octadecanoyl-sn-glycero-3-phosphocholine + 1-nonadecanoyl-2-(9Z-octadecenoyl)-sn-glycero-3-phosphocholine. Its pathway is phospholipid metabolism. In terms of biological role, acyltransferase required to remodel newly synthesized phospholipid cardiolipin (1',3'-bis-[1,2-diacyl-sn-glycero-3-phospho]-glycerol or CL), a key component of the mitochondrial inner membrane, with tissue specific acyl chains necessary for adequate mitochondrial function. Its role in cellular physiology is to improve mitochondrial performance. CL is critical for the coassembly of lipids and proteins in mitochondrial membranes. For instance, remodeling of the acyl groups of CL in the mitochondrial inner membrane affects the assembly and stability of respiratory chain complex IV and its supercomplex forms. Catalyzes the transacylation between phospholipids and lysophospholipids, with the highest rate being between phosphatidylcholine (1,2-diacyl-sn-glycero-3-phosphocholine or PC) and CL. Catalyzes both 1-acyl-sn-glycero-3-phosphocholine (lysophosphatidylcholine or LPC) reacylation and PC-CL transacylation, that means, it exchanges acyl groups between CL and PC by a combination of forward and reverse transacylations. Also catalyzes transacylations between other phospholipids such as phosphatidylethanolamine (1,2-diacyl-sn-glycero-3-phosphoethanolamine or PE) and CL, between PC and PE, and between PC and phosphatidate (1,2-diacyl-sn-glycero-3-phosphate or PA), although at lower rate. Not regiospecific, it transfers acyl groups into any of the sn-1 and sn-2 positions of the monolysocardiolipin (MLCL), which is an important prerequisite for uniformity and symmetry in CL acyl distribution. Cannot transacylate dilysocardiolipin (DLCL), thus, the role of MLCL is limited to that of an acyl acceptor. CoA-independent, it can reshuffle molecular species within a single phospholipid class. Redistributes fatty acids between MLCL, CL, and other lipids, which prolongs the half-life of CL. Its action is completely reversible, which allows for cyclic changes, such as fission and fusion or bending and flattening of the membrane. Hence, by contributing to the flexibility of the lipid composition, it plays an important role in the dynamics of mitochondria membranes. Essential for the final stage of spermatogenesis, spermatid individualization. Required for the initiation of mitophagy. This is Tafazzin from Drosophila melanogaster (Fruit fly).